The primary structure comprises 709 residues: Alpha-1,2-mannosyltransferase MNN24 (709 aa).

Over 1–9 the chain is Cytoplasmic; that stretch reads MFSIPVSSK. The helical transmembrane segment at 10 to 30 threads the bilayer; sequence TVRLILVSLLLITLINILAAF. Topologically, residues 31 to 709 are extracellular; that stretch reads QRSTLSSWFP…KNHIEFLEIS (679 aa). N-linked (GlcNAc...) asparagine glycosylation occurs at asparagine 317.

This sequence belongs to the MNN1/MNT family.

The protein resides in the golgi apparatus membrane. Its pathway is protein modification; protein glycosylation. Alpha-1,2-mannosyltransferase required for cell wall integrity. Responsible for addition of the first alpha-1,2-linked mannose to form the branches on the mannan backbone of oligosaccharides. Addition of alpha-1,2-mannose is required for stabilization of the alpha-1,6-mannose backbone and hence regulates mannan fibril length; and is important for both immune recognition and virulence. This chain is Alpha-1,2-mannosyltransferase MNN24 (MNN24), found in Candida albicans (strain SC5314 / ATCC MYA-2876) (Yeast).